A 281-amino-acid polypeptide reads, in one-letter code: Acetylglutamate kinase (281 aa).

Residues 64 to 65, Arg-86, and Asn-179 each bind substrate; that span reads GG.

This sequence belongs to the acetylglutamate kinase family. ArgB subfamily.

It localises to the cytoplasm. It catalyses the reaction N-acetyl-L-glutamate + ATP = N-acetyl-L-glutamyl 5-phosphate + ADP. It participates in amino-acid biosynthesis; L-arginine biosynthesis; N(2)-acetyl-L-ornithine from L-glutamate: step 2/4. Functionally, catalyzes the ATP-dependent phosphorylation of N-acetyl-L-glutamate. This chain is Acetylglutamate kinase, found in Campylobacter curvus (strain 525.92).